Consider the following 400-residue polypeptide: Forkhead box protein Q1 (400 aa).

The tract at residues 1–112 (MKLEVFVPRA…EGARSKPYTR (112 aa)) is disordered. Residues 32–54 (LSAAGDDSLGSDGDCAANSPAAG) are compositionally biased toward low complexity. Gly residues-rich tracts occupy residues 55–66 (SGAGDLEGGGGE) and 95–104 (CAGGVGGGEG). Residues 115-210 (KPPYSYIALI…ADGVFRRRRK (96 aa)) constitute a DNA-binding region (fork-head). The disordered stretch occupies residues 213–264 (SHRTTVSASGLRPEEAPPGPAGTPQPAPAARSSPIARSPARQEERSSPASKF). A compositionally biased stretch (pro residues) spans 228–239 (APPGPAGTPQPA). The segment covering 240-251 (PAARSSPIARSP) has biased composition (low complexity).

As to expression, expressed in kidney and stomach. Expression in the outer medulla of the kidney and the transitional epithelium. Expressed in the hair follicle medulla.

The protein localises to the nucleus. Its function is as follows. Plays a role in hair follicle differentiation. This Mus musculus (Mouse) protein is Forkhead box protein Q1 (Foxq1).